A 314-amino-acid chain; its full sequence is Acetaldehyde dehydrogenase (314 aa).

14-17 contacts NAD(+); it reads SGNI. Cys-132 serves as the catalytic Acyl-thioester intermediate. Residues 163-171 and Asn-291 contribute to the NAD(+) site; that span reads SAGPGTRAN.

It belongs to the acetaldehyde dehydrogenase family.

The enzyme catalyses acetaldehyde + NAD(+) + CoA = acetyl-CoA + NADH + H(+). The chain is Acetaldehyde dehydrogenase from Polaromonas sp. (strain JS666 / ATCC BAA-500).